Reading from the N-terminus, the 231-residue chain is Urease subunit gamma/beta (231 aa).

Residues 1 to 101 (MLLTPTELER…LVTVHQPIRP (101 aa)) form a urease gamma region. The segment at 102–231 (GKLPLAVMPT…RARAQHFKGA (130 aa)) is urease beta.

This sequence in the N-terminal section; belongs to the urease gamma subunit family. In the C-terminal section; belongs to the urease beta subunit family. Heterohexamer of 3 UreC (alpha) and 3 UreAB (gamma/beta) subunits.

It is found in the cytoplasm. The catalysed reaction is urea + 2 H2O + H(+) = hydrogencarbonate + 2 NH4(+). Its pathway is nitrogen metabolism; urea degradation; CO(2) and NH(3) from urea (urease route): step 1/1. This chain is Urease subunit gamma/beta, found in Pseudomonas syringae pv. tomato (strain ATCC BAA-871 / DC3000).